Consider the following 699-residue polypeptide: Transcription factor MYC2 (699 aa).

Residues Pro-25 to Ala-60 form a disordered region. Residues Ile-93 to Glu-158 form a JAZ-interaction domain region. Residues Asp-290–Arg-530 form a disordered region. Over residues His-306–Pro-321 the composition is skewed to polar residues. Low complexity-rich tracts occupy residues Pro-335–Gln-349 and Ser-387–Leu-412. Polar residues-rich tracts occupy residues Phe-413 to Pro-449 and Ser-459 to Thr-472. The segment covering Ser-478–Ser-494 has biased composition (basic and acidic residues). The Nuclear localization signal signature appears at Lys-506–Lys-514. The segment covering Arg-507–Ala-516 has biased composition (basic residues). A compositionally biased stretch (basic and acidic residues) spans Asn-517 to Arg-530. Positions Glu-520–Arg-533 are basic motif; degenerate. In terms of domain architecture, bHLH spans Glu-520–Leu-569. Positions Glu-534–Leu-569 are helix-loop-helix motif. A disordered region spans residues Thr-582–Arg-611.

Belongs to the bHLH protein family. Interacts with TIFY3/JAZ1. In terms of tissue distribution, highly expressed in spikelets and floral organs.

The protein localises to the nucleus. In terms of biological role, transcriptional activator involved in jasmonate (JA) signaling pathway during spikelet development. Binds to the G2 region G-box (5'-CACGTG-3') of the MADS1 promoter and thus directly regulates the expression of MADS1. Its function in MADS1 activation is abolished by TIFY3/JAZ1 which directly target MYC2 during spikelet development. The sequence is that of Transcription factor MYC2 from Oryza sativa subsp. japonica (Rice).